Consider the following 925-residue polypeptide: Serine/threonine-protein phosphatase 1 regulatory subunit 10 (925 aa).

The interval 1–348 (MGSGPIDPKE…EPAPPSEAMD (348 aa)) is interaction with TOX4. Residues 73-147 (KLLNNWLTYS…SDWMAVIRSQ (75 aa)) form the TFIIS N-terminal domain. The interval 147–211 (QSSTQPAEKD…APSHAKFRST (65 aa)) is disordered. Composition is skewed to basic and acidic residues over residues 153 to 166 (AEKDKKKRKEEGKS) and 174 to 196 (PLTEVKAETRAEEAPEKKREKPK). Residues Lys179 and Lys262 each participate in a glycyl lysine isopeptide (Lys-Gly) (interchain with G-Cter in SUMO2) cross-link. Disordered regions lie at residues 304 to 398 (KIKK…KRKT), 536 to 555 (TLEPGGAGGSPDGAGGSKLP), and 587 to 890 (SIMG…HGGD). Ser313 bears the Phosphoserine mark. A compositionally biased stretch (low complexity) spans 325–336 (KTSTEPSTAKPS). The necessary for interaction with PPP1CA stretch occupies residues 357–433 (PPVEVPELMD…NKIKDFGEAA (77 aa)). At Ser382 the chain carries Phosphoserine. The necessary for interaction with PPP1CC stretch occupies residues 393 to 408 (GRKRKTVTWPEEGKLR). A PP1-binding motif motif is present at residues 394–423 (RKRKTVTWPEEGKLREYFYFELDETERVNV). Thr398 bears the Phosphothreonine; by PKA mark. Residues 418–619 (TERVNVNKIK…IKQMLVPHGL (202 aa)) form an interaction with WDR82 region. The segment covering 540-551 (GGAGGSPDGAGG) has biased composition (gly residues). A phosphoserine mark is found at Ser545 and Ser591. Basic and acidic residues predominate over residues 596 to 611 (PSEELLKQPDYSDKIK). Residues 644-655 (PPGPGGPMPGPH) show a composition bias toward pro residues. Residues 656-665 (GGPGGPGGPV) show a composition bias toward gly residues. Arg668 carries the omega-N-methylarginine modification. The span at 679 to 693 (GDPFWDGPGDPMRGG) shows a compositional bias: low complexity. Omega-N-methylarginine is present on residues Arg696 and Arg741. 2 stretches are compositionally biased toward gly residues: residues 728 to 766 (ARGGRSGGGPPNGRGGPGGGMVGGGGHRPHEGPGGGMSS) and 775 to 829 (GPGG…AGGG). Composition is skewed to basic and acidic residues over residues 846 to 871 (PHDVPGHRGHDHRGPPPHEHRGHDGP) and 879 to 890 (RGHDGGHNHGGD). Residues 891–919 (MSKRPVCRHFMMKGNCRYENNCAFYHPGV) form a C3H1-type zinc finger.

As to quaternary structure, component of the PNUTS-PP1 complex (also named PTW/PP1 complex), composed of PPP1R10/PNUTS, TOX4, WDR82, and PPP1CA (or PPP1CB or PPP1CC). Phosphorylated on Ser-398 by PKA within the region necessary for interaction with PPP1CA.

It is found in the nucleus. It localises to the chromosome. In terms of biological role, substrate-recognition component of the PNUTS-PP1 protein phosphatase complex, a protein phosphatase 1 (PP1) complex that promotes RNA polymerase II transcription pause-release, allowing transcription elongation. Promoter-proximal pausing by RNA polymerase II is a transcription halt following transcription initiation but prior to elongation, which acts as a checkpoint to control that transcripts are favorably configured for transcriptional elongation. The PNUTS-PP1 complex mediates the release of RNA polymerase II from promoter-proximal region of genes by catalyzing dephosphorylation of proteins involved in transcription, such as AFF4, CDK9, MEPCE, INTS12, NCBP1, POLR2M/GDOWN1 and SUPT6H. The PNUTS-PP1 complex also regulates RNA polymerase II transcription termination by mediating dephosphorylation of SUPT5H in termination zones downstream of poly(A) sites, thereby promoting deceleration of RNA polymerase II transcription. PNUTS-PP1 complex is also involved in the response to replication stress by mediating dephosphorylation of POLR2A at 'Ser-5' of the CTD, promoting RNA polymerase II degradation. The PNUTS-PP1 complex also plays a role in the control of chromatin structure and cell cycle progression during the transition from mitosis into interphase. PNUTS-PP1 complex mediates dephosphorylation of MYC, promoting MYC stability by preventing MYC ubiquitination by the SCF(FBXW7) complex. In addition to acts as a substrate-recognition component, PPP1R10/PNUTS also acts as a nuclear targeting subunit for the PNUTS-PP1 complex. In some context, PPP1R10/PNUTS also acts as an inhibitor of protein phosphatase 1 (PP1) activity by preventing access to substrates, such as RB. The protein is Serine/threonine-protein phosphatase 1 regulatory subunit 10 (PPP1R10) of Sus scrofa (Pig).